A 96-amino-acid chain; its full sequence is MPEDNVIFVGNKPVMNYVLAAVTQFNEGAKEVTIKARGRAISRAVDTAEVVRHRFLTDVEIDRIQISTEELASEKGEKINVSSIEIFLKRPRAATD.

The protein belongs to the histone-like Alba family.

It localises to the cytoplasm. It is found in the chromosome. Binds double-stranded DNA tightly but without sequence specificity. Involved in DNA compaction. In Methanocella arvoryzae (strain DSM 22066 / NBRC 105507 / MRE50), this protein is DNA/RNA-binding protein Alba.